Reading from the N-terminus, the 271-residue chain is Acetyl-coenzyme A carboxylase carboxyl transferase subunit alpha (271 aa).

In terms of domain architecture, CoA carboxyltransferase C-terminal spans 1–247 (MSRELIRTAD…KKTILEALGE (247 aa)).

Belongs to the AccA family. In terms of assembly, acetyl-CoA carboxylase is a heterohexamer composed of biotin carboxyl carrier protein (AccB), biotin carboxylase (AccC) and two subunits each of ACCase subunit alpha (AccA) and ACCase subunit beta (AccD).

The protein resides in the cytoplasm. It carries out the reaction N(6)-carboxybiotinyl-L-lysyl-[protein] + acetyl-CoA = N(6)-biotinyl-L-lysyl-[protein] + malonyl-CoA. It functions in the pathway lipid metabolism; malonyl-CoA biosynthesis; malonyl-CoA from acetyl-CoA: step 1/1. Its function is as follows. Component of the acetyl coenzyme A carboxylase (ACC) complex. First, biotin carboxylase catalyzes the carboxylation of biotin on its carrier protein (BCCP) and then the CO(2) group is transferred by the carboxyltransferase to acetyl-CoA to form malonyl-CoA. The protein is Acetyl-coenzyme A carboxylase carboxyl transferase subunit alpha of Clostridium perfringens (strain 13 / Type A).